The primary structure comprises 132 residues: Glycine cleavage system H protein (132 aa).

In terms of domain architecture, Lipoyl-binding spans 27 to 109 (FATIGISAFA…FDFGWILKVK (83 aa)). Lys68 is modified (N6-lipoyllysine).

The protein belongs to the GcvH family. In terms of assembly, the glycine cleavage system is composed of four proteins: P, T, L and H. It depends on (R)-lipoate as a cofactor.

In terms of biological role, the glycine cleavage system catalyzes the degradation of glycine. The H protein shuttles the methylamine group of glycine from the P protein to the T protein. The chain is Glycine cleavage system H protein from Rhodopirellula baltica (strain DSM 10527 / NCIMB 13988 / SH1).